The chain runs to 152 residues: Small ribosomal subunit protein bS6 (152 aa).

Residues valine 94–serine 152 are disordered. Basic and acidic residues-rich tracts occupy residues glutamate 114 to glutamine 129 and threonine 138 to serine 152.

The protein belongs to the bacterial ribosomal protein bS6 family.

Its function is as follows. Binds together with bS18 to 16S ribosomal RNA. This is Small ribosomal subunit protein bS6 from Prochlorococcus marinus (strain MIT 9312).